Consider the following 476-residue polypeptide: Aspartate kinase Ask_Ect (476 aa).

Positions 405 to 476 (SAIGSDLKVK…ENHGDVIAAA (72 aa)) constitute an ACT domain.

Belongs to the aspartokinase family. Monomer.

The protein localises to the cytoplasm. It catalyses the reaction L-aspartate + ATP = 4-phospho-L-aspartate + ADP. It participates in amine and polyamine biosynthesis; ectoine biosynthesis. Allosterically and strongly feedback inhibited by tryptophan. The presence of either 650 mM NaCl or KCl reduces the inhibition by tryptophan. Its function is as follows. Involved in the biosynthesis of L-aspartate-beta-semialdehyde, which is an intermediate in the biosynthesis of ectoine, a highly soluble organic osmolyte, called compatible solute. Ectoine is used to avoid excessive water efflux, plasmolysis, molecular crowding of the cytoplasm, and cessation of growth in high salinity environments. Catalyzes the phosphorylation of the beta-carboxyl group of L-aspartate to yield 4-phospho-L-aspartate. The protein is Aspartate kinase Ask_Ect (ask) of Stutzerimonas stutzeri (strain A1501) (Pseudomonas stutzeri).